The chain runs to 225 residues: Thymidylate kinase (225 aa).

An ATP-binding site is contributed by 9-16 (GIEGCGKT).

The protein belongs to the thymidylate kinase family.

The enzyme catalyses dTMP + ATP = dTDP + ADP. Functionally, phosphorylation of dTMP to form dTDP in both de novo and salvage pathways of dTTP synthesis. In Geobacter sp. (strain M21), this protein is Thymidylate kinase.